Consider the following 192-residue polypeptide: ATP synthase subunit b 2 (192 aa).

Residues 39–59 (SGFLAQLIWLALAFGLLYYLM) form a helical membrane-spanning segment.

The protein belongs to the ATPase B chain family. As to quaternary structure, F-type ATPases have 2 components, F(1) - the catalytic core - and F(0) - the membrane proton channel. F(1) has five subunits: alpha(3), beta(3), gamma(1), delta(1), epsilon(1). F(0) has three main subunits: a(1), b(2) and c(10-14). The alpha and beta chains form an alternating ring which encloses part of the gamma chain. F(1) is attached to F(0) by a central stalk formed by the gamma and epsilon chains, while a peripheral stalk is formed by the delta and b chains.

It localises to the cell inner membrane. F(1)F(0) ATP synthase produces ATP from ADP in the presence of a proton or sodium gradient. F-type ATPases consist of two structural domains, F(1) containing the extramembraneous catalytic core and F(0) containing the membrane proton channel, linked together by a central stalk and a peripheral stalk. During catalysis, ATP synthesis in the catalytic domain of F(1) is coupled via a rotary mechanism of the central stalk subunits to proton translocation. In terms of biological role, component of the F(0) channel, it forms part of the peripheral stalk, linking F(1) to F(0). The b'-subunit is a diverged and duplicated form of b found in plants and photosynthetic bacteria. The protein is ATP synthase subunit b 2 (atpF2) of Methylobacterium radiotolerans (strain ATCC 27329 / DSM 1819 / JCM 2831 / NBRC 15690 / NCIMB 10815 / 0-1).